We begin with the raw amino-acid sequence, 273 residues long: Coiled-coil domain-containing protein 122 (273 aa).

Basic and acidic residues predominate over residues 1 to 17 (MSDNKERKSQGFPKEDN). Residues 1 to 39 (MSDNKERKSQGFPKEDNQDTSSLADAVEKVAKQQQSQAS) form a disordered region. Coiled coils occupy residues 24–116 (ADAV…TAQE) and 179–269 (NRIT…RKCI).

This Homo sapiens (Human) protein is Coiled-coil domain-containing protein 122 (CCDC122).